A 179-amino-acid chain; its full sequence is Large ribosomal subunit protein uL5 (179 aa).

Belongs to the universal ribosomal protein uL5 family. Part of the 50S ribosomal subunit; part of the 5S rRNA/L5/L18/L25 subcomplex. Contacts the 5S rRNA and the P site tRNA. Forms a bridge to the 30S subunit in the 70S ribosome.

Functionally, this is one of the proteins that bind and probably mediate the attachment of the 5S RNA into the large ribosomal subunit, where it forms part of the central protuberance. In the 70S ribosome it contacts protein S13 of the 30S subunit (bridge B1b), connecting the 2 subunits; this bridge is implicated in subunit movement. Contacts the P site tRNA; the 5S rRNA and some of its associated proteins might help stabilize positioning of ribosome-bound tRNAs. The sequence is that of Large ribosomal subunit protein uL5 from Pectobacterium carotovorum subsp. carotovorum (strain PC1).